Consider the following 375-residue polypeptide: 23S rRNA (uracil(747)-C(5))-methyltransferase RlmC (375 aa).

[4Fe-4S] cluster-binding residues include Cys-3, Cys-11, Cys-14, and Cys-87. S-adenosyl-L-methionine contacts are provided by Gln-212, Phe-241, Glu-262, and Asn-307. The Nucleophile role is filled by Cys-334.

This sequence belongs to the class I-like SAM-binding methyltransferase superfamily. RNA M5U methyltransferase family. RlmC subfamily.

The enzyme catalyses uridine(747) in 23S rRNA + S-adenosyl-L-methionine = 5-methyluridine(747) in 23S rRNA + S-adenosyl-L-homocysteine + H(+). Catalyzes the formation of 5-methyl-uridine at position 747 (m5U747) in 23S rRNA. The sequence is that of 23S rRNA (uracil(747)-C(5))-methyltransferase RlmC from Xenorhabdus nematophila (strain ATCC 19061 / DSM 3370 / CCUG 14189 / LMG 1036 / NCIMB 9965 / AN6).